The sequence spans 564 residues: Bifunctional sesquiterpene synthase 1 (564 aa).

The Mg(2+) site is built by aspartate 317, aspartate 321, aspartate 461, and glutamate 469. The DDXXD motif motif lies at 317 to 321 (DDTFD).

It belongs to the terpene synthase family. It depends on Mg(2+) as a cofactor.

It carries out the reaction (2E,6E)-farnesyl diphosphate = alpha-copaene + diphosphate. The catalysed reaction is (2E,6E)-farnesyl diphosphate = delta-cadinene + diphosphate. It functions in the pathway secondary metabolite biosynthesis; terpenoid biosynthesis. Functionally, sesquiterpene synthase converting farnesyl diphosphate to alpha copaene and delta-cadinene as the major products. The polypeptide is Bifunctional sesquiterpene synthase 1 (Phyla dulcis (Aztec sweet herb)).